The following is a 232-amino-acid chain: Large ribosomal subunit protein uL1 (232 aa).

This sequence belongs to the universal ribosomal protein uL1 family. In terms of assembly, part of the 50S ribosomal subunit.

In terms of biological role, binds directly to 23S rRNA. The L1 stalk is quite mobile in the ribosome, and is involved in E site tRNA release. Functionally, protein L1 is also a translational repressor protein, it controls the translation of the L11 operon by binding to its mRNA. This is Large ribosomal subunit protein uL1 from Xanthomonas campestris pv. campestris (strain B100).